The following is a 188-amino-acid chain: Inosine triphosphate pyrophosphatase (188 aa).

Thr9 to Lys14 contributes to the ITP binding site. Glu39 is a binding site for Mg(2+). ITP-binding positions include Lys51, Asp67–Thr68, Lys84, Phe143–Asp146, Lys166, and His171–Arg172.

Belongs to the HAM1 NTPase family. Homodimer. The cofactor is Mg(2+). Mn(2+) serves as cofactor.

Its subcellular location is the cytoplasm. The enzyme catalyses ITP + H2O = IMP + diphosphate + H(+). It catalyses the reaction dITP + H2O = dIMP + diphosphate + H(+). The catalysed reaction is XTP + H2O = XMP + diphosphate + H(+). Pyrophosphatase that hydrolyzes non-canonical purine nucleotides such as inosine triphosphate (ITP), deoxyinosine triphosphate (dITP) or xanthosine 5'-triphosphate (XTP) to their respective monophosphate derivatives. The enzyme does not distinguish between the deoxy- and ribose forms. Probably excludes non-canonical purines from RNA and DNA precursor pools, thus preventing their incorporation into RNA and DNA and avoiding chromosomal lesions. This chain is Inosine triphosphate pyrophosphatase, found in Aedes aegypti (Yellowfever mosquito).